The following is a 325-amino-acid chain: Ribose-phosphate pyrophosphokinase (325 aa).

Residues 45–47 (NGE) and 104–105 (RQ) each bind ATP. His-138 and Asp-178 together coordinate Mg(2+). Residue Lys-202 is part of the active site. Residues Arg-204, Asp-230, and 234 to 238 (DTGGT) each bind D-ribose 5-phosphate.

The protein belongs to the ribose-phosphate pyrophosphokinase family. Class I subfamily. Homohexamer. Mg(2+) is required as a cofactor.

It is found in the cytoplasm. The catalysed reaction is D-ribose 5-phosphate + ATP = 5-phospho-alpha-D-ribose 1-diphosphate + AMP + H(+). Its pathway is metabolic intermediate biosynthesis; 5-phospho-alpha-D-ribose 1-diphosphate biosynthesis; 5-phospho-alpha-D-ribose 1-diphosphate from D-ribose 5-phosphate (route I): step 1/1. Its function is as follows. Involved in the biosynthesis of the central metabolite phospho-alpha-D-ribosyl-1-pyrophosphate (PRPP) via the transfer of pyrophosphoryl group from ATP to 1-hydroxyl of ribose-5-phosphate (Rib-5-P). The polypeptide is Ribose-phosphate pyrophosphokinase (Corynebacterium glutamicum (strain ATCC 13032 / DSM 20300 / JCM 1318 / BCRC 11384 / CCUG 27702 / LMG 3730 / NBRC 12168 / NCIMB 10025 / NRRL B-2784 / 534)).